The chain runs to 309 residues: Aspartate carbamoyltransferase catalytic subunit (309 aa).

Carbamoyl phosphate-binding residues include arginine 55 and threonine 56. Residue lysine 85 participates in L-aspartate binding. 3 residues coordinate carbamoyl phosphate: arginine 106, histidine 135, and glutamine 138. Residues arginine 168 and arginine 230 each coordinate L-aspartate. Residues leucine 268 and proline 269 each contribute to the carbamoyl phosphate site.

Belongs to the aspartate/ornithine carbamoyltransferase superfamily. ATCase family. Heterododecamer (2C3:3R2) of six catalytic PyrB chains organized as two trimers (C3), and six regulatory PyrI chains organized as three dimers (R2).

The enzyme catalyses carbamoyl phosphate + L-aspartate = N-carbamoyl-L-aspartate + phosphate + H(+). The protein operates within pyrimidine metabolism; UMP biosynthesis via de novo pathway; (S)-dihydroorotate from bicarbonate: step 2/3. Catalyzes the condensation of carbamoyl phosphate and aspartate to form carbamoyl aspartate and inorganic phosphate, the committed step in the de novo pyrimidine nucleotide biosynthesis pathway. This Vibrio cholerae serotype O1 (strain ATCC 39315 / El Tor Inaba N16961) protein is Aspartate carbamoyltransferase catalytic subunit.